A 395-amino-acid polypeptide reads, in one-letter code: Torsin-3A (395 aa).

The signal sequence occupies residues M1 to G24. An N-linked (GlcNAc...) asparagine glycan is attached at N120. G165 to N172 serves as a coordination point for ATP.

It belongs to the ClpA/ClpB family. Torsin subfamily. May not form homohexamers. Post-translationally, N-glycosylated.

Its subcellular location is the cytoplasm. It localises to the endoplasmic reticulum lumen. This is Torsin-3A (Tor3a) from Rattus norvegicus (Rat).